Consider the following 157-residue polypeptide: Probable succinate transporter subunit YjjB (157 aa).

4 helical membrane passes run 2-22 (GIISFIFALAEDMLLAAIPAV), 55-75 (AGFNIEWATFLAALLVGSIGI), 87-107 (IFTVAAVIPMFPGISAYTAMI), and 129-149 (FLKASSIVGALSIGLSIPGLW).

Belongs to the ThrE exporter (TC 2.A.79) family. As to quaternary structure, the transporter is composed of YjjB and YjjP.

Its subcellular location is the cell inner membrane. Functionally, involved in succinate export with YjjP. Both proteins are required for export. The protein is Probable succinate transporter subunit YjjB of Klebsiella pneumoniae subsp. pneumoniae (strain ATCC 700721 / MGH 78578).